The following is a 132-amino-acid chain: Small ribosomal subunit protein uS9 (132 aa).

Belongs to the universal ribosomal protein uS9 family.

This Mycoplasma genitalium (strain ATCC 33530 / DSM 19775 / NCTC 10195 / G37) (Mycoplasmoides genitalium) protein is Small ribosomal subunit protein uS9 (rpsI).